We begin with the raw amino-acid sequence, 461 residues long: Spermidine coumaroyl-CoA acyltransferase (461 aa).

Catalysis depends on proton acceptor residues His168 and Asp393.

It belongs to the plant acyltransferase family. In terms of assembly, monomer. Mainly expressed in roots at low levels, specifically, in the root tip.

It carries out the reaction 2 (E)-4-coumaroyl-CoA + spermidine = N(1),N(8)-bis(coumaroyl)-spermidine + 2 CoA + 2 H(+). It functions in the pathway amine and polyamine metabolism; spermidine metabolism. Functionally, spermidine coumaroyl-CoA acyltransferase that mediates the conversion of spermidine into dicoumaroyl-spermidine. This chain is Spermidine coumaroyl-CoA acyltransferase, found in Arabidopsis thaliana (Mouse-ear cress).